The sequence spans 462 residues: tRNA-2-methylthio-N(6)-dimethylallyladenosine synthase (462 aa).

The MTTase N-terminal domain maps to 18 to 138; sequence RKVFVKTYGC…LPNALARVRS (121 aa). 6 residues coordinate [4Fe-4S] cluster: cysteine 27, cysteine 63, cysteine 101, cysteine 179, cysteine 183, and cysteine 186. Positions 165–397 constitute a Radical SAM core domain; sequence RKRGVSAFLT…QALLSEQQYA (233 aa). The 63-residue stretch at 400 to 462 folds into the TRAM domain; the sequence is DSMIGREMDV…TNSLIAQKLA (63 aa).

Belongs to the methylthiotransferase family. MiaB subfamily. As to quaternary structure, monomer. It depends on [4Fe-4S] cluster as a cofactor.

The protein resides in the cytoplasm. It carries out the reaction N(6)-dimethylallyladenosine(37) in tRNA + (sulfur carrier)-SH + AH2 + 2 S-adenosyl-L-methionine = 2-methylsulfanyl-N(6)-dimethylallyladenosine(37) in tRNA + (sulfur carrier)-H + 5'-deoxyadenosine + L-methionine + A + S-adenosyl-L-homocysteine + 2 H(+). In terms of biological role, catalyzes the methylthiolation of N6-(dimethylallyl)adenosine (i(6)A), leading to the formation of 2-methylthio-N6-(dimethylallyl)adenosine (ms(2)i(6)A) at position 37 in tRNAs that read codons beginning with uridine. The protein is tRNA-2-methylthio-N(6)-dimethylallyladenosine synthase of Brucella anthropi (strain ATCC 49188 / DSM 6882 / CCUG 24695 / JCM 21032 / LMG 3331 / NBRC 15819 / NCTC 12168 / Alc 37) (Ochrobactrum anthropi).